The chain runs to 339 residues: MTVRVGINGFGRIGRNFYRALLAQQEQGTADVEVVAANDITDNSTLAHLLKFDSILGRLPCDVGLEGDDTIVVGRAKIKALAVREGPAALPWGDLGVDVVVESTGLFTNAAKAKGHLDAGAKKVIISAPATDEDITIVLGVNDDKYDGSQNIISNASCTTNCLAPLAKVLDDEFGIVKGLMTTIHAYTQDQNLQDGPHKDLRRARAAALNIVPTSTGAAKAIGLVMPQLKGKLDGYALRVPIPTGSVTDLTVDLSTRASVDEINAAFKAAAEGRLKGILKYYDAPIVSSDIVTDPHSSIFDSGLTKVIDDQAKVVSWYDNEWGYSNRLVDLVTLVGKSL.

NAD(+)-binding positions include 12–13 (RI), Asp-39, Arg-84, and Ser-127. D-glyceraldehyde 3-phosphate is bound by residues 157-159 (SCT), Thr-188, Arg-203, 216-217 (TG), and Arg-239. The Nucleophile role is filled by Cys-158. Asn-320 provides a ligand contact to NAD(+).

This sequence belongs to the glyceraldehyde-3-phosphate dehydrogenase family. In terms of assembly, homotetramer.

It is found in the cytoplasm. The enzyme catalyses D-glyceraldehyde 3-phosphate + phosphate + NAD(+) = (2R)-3-phospho-glyceroyl phosphate + NADH + H(+). The protein operates within carbohydrate degradation; glycolysis; pyruvate from D-glyceraldehyde 3-phosphate: step 1/5. Its function is as follows. Catalyzes the oxidative phosphorylation of glyceraldehyde 3-phosphate (G3P) to 1,3-bisphosphoglycerate (BPG) using the cofactor NAD. The first reaction step involves the formation of a hemiacetal intermediate between G3P and a cysteine residue, and this hemiacetal intermediate is then oxidized to a thioester, with concomitant reduction of NAD to NADH. The reduced NADH is then exchanged with the second NAD, and the thioester is attacked by a nucleophilic inorganic phosphate to produce BPG. The chain is Glyceraldehyde-3-phosphate dehydrogenase (gap) from Mycobacterium bovis (strain ATCC BAA-935 / AF2122/97).